The chain runs to 329 residues: MACVLAIGSILFVWILGKGKYSGAQLIYRMATNFAISQGCCLVTCACELTEEIKHLHTRYNGHYWRALKASFNLSCAAFVTAILCYVFYEPKLMASLPLTIDITLTLLSWLFCWILGIQGPTPATISEITEIKQLNVAHGLAWSYYVGYLQFVLPALKESIQKFNEENHNLLKFPETCRLHILIPLSCRLYGDLKDVDENITFLKEIPPLYIDRAGIKGRVFKNNVYRILDEDGRPYNCIVEYATPLASLLKMTDIPSAAFSADDRLQQTKLFYRTLKDILENAHELQNTYRLIVYEDFPETKDHSRHLLSQEILKHIRQQHSEEYSML.

The Cytoplasmic portion of the chain corresponds to 1 to 4 (MACV). Residues 5-25 (LAIGSILFVWILGKGKYSGAQ) form a helical membrane-spanning segment. Position 26 (Leu-26) is a topological domain, lumenal. A helical transmembrane segment spans residues 27 to 52 (IYRMATNFAISQGCCLVTCACELTEE). Residues 53–74 (IKHLHTRYNGHYWRALKASFNL) lie on the Cytoplasmic side of the membrane. Residues 75–88 (SCAAFVTAILCYVF) form a helical membrane-spanning segment. The Lumenal segment spans residues 89-98 (YEPKLMASLP). Residues 99 to 116 (LTIDITLTLLSWLFCWIL) form a helical membrane-spanning segment. The Cytoplasmic segment spans residues 117-329 (GIQGPTPATI…QQHSEEYSML (213 aa)). A cyclic dinucleotide-binding domain (CBD) region spans residues 135–325 (LNVAHGLAWS…KHIRQQHSEE (191 aa)). 2',3'-cGAMP-binding residues include Ser-144, Tyr-149, Arg-220, and Thr-245. 3',3'-c-di-GMP contacts are provided by residues Ser-144, Tyr-149, 220–223 (RVFK), and Thr-245.

This sequence belongs to the STING family. As to quaternary structure, homodimer; forms a homodimer in absence of cyclic nucleotide (c-di-GMP or cGAMP). Homotetramer; in presence of cyclic nucleotide (c-di-GMP or cGAMP), forms tetramers and higher-order oligomers through side-by-side packing.

The protein resides in the endoplasmic reticulum membrane. It is found in the cytoplasm. It localises to the perinuclear region. Its subcellular location is the endoplasmic reticulum-Golgi intermediate compartment membrane. The protein localises to the golgi apparatus membrane. The protein resides in the cytoplasmic vesicle. It is found in the autophagosome membrane. It catalyses the reaction H(+)(in) = H(+)(out). Its function is as follows. Sensor of cytosolic DNA from bacteria and viruses that promotes autophagy. Acts by recognizing and binding cyclic GMP-AMP (cGAMP), a messenger produced by CGAS in response to DNA in the cytosol. Exhibits guanine base-specific ligand recognition: binds 3'-3'linked cGAMP, 2'-3' linked cGAMP and 3'-3' linked c-di-GMP with much greater affinity as compared to 3'-3' linked c-di-AMP. Following cGAMP-binding, promotes the formation of autophagosomes, leading to target cytosolic DNA for degradation by the lysosome. Promotes autophagy by acting as a proton channel that directs proton efflux from the Golgi to facilitate LC3 lipidation. Lacks the C-terminal tail (CTT) found in other vertebrate orthologs which is essential for interferon signaling. This Xenopus tropicalis (Western clawed frog) protein is Stimulator of interferon genes protein.